The chain runs to 172 residues: Small ribosomal subunit protein uS5 (172 aa).

The region spanning 17–80 (LREKMISVNR…EQARRNMFKV (64 aa)) is the S5 DRBM domain.

It belongs to the universal ribosomal protein uS5 family. In terms of assembly, part of the 30S ribosomal subunit. Contacts proteins S4 and S8.

With S4 and S12 plays an important role in translational accuracy. Functionally, located at the back of the 30S subunit body where it stabilizes the conformation of the head with respect to the body. The chain is Small ribosomal subunit protein uS5 from Paraburkholderia phytofirmans (strain DSM 17436 / LMG 22146 / PsJN) (Burkholderia phytofirmans).